The chain runs to 192 residues: Thioredoxin-like 3-2, chloroplastic (192 aa).

Residues 1 to 55 constitute a chloroplast transit peptide; it reads MSEIVNLSSSLRSLNPKISPLVPPYRQTSSSFSRPRNFKYHSFTDKICLAAERIR. The Thioredoxin domain occupies 66 to 191; sequence LQELDDSPVS…VREMIENDSI (126 aa). Active-site nucleophile residues include cysteine 110 and cysteine 113. Cysteine 110 and cysteine 113 are oxidised to a cystine.

Belongs to the thioredoxin family.

It is found in the plastid. It localises to the chloroplast stroma. Functionally, probable thiol-disulfide oxidoreductase that may participate in various redox reactions. This chain is Thioredoxin-like 3-2, chloroplastic (WCRKC2), found in Arabidopsis thaliana (Mouse-ear cress).